A 390-amino-acid chain; its full sequence is LL-diaminopimelate aminotransferase 2 (390 aa).

2 residues coordinate substrate: Tyr13 and Gly38. Pyridoxal 5'-phosphate-binding positions include Tyr67, 102-103 (SK), Tyr127, Asn177, Tyr208, and 236-238 (SLS). 3 residues coordinate substrate: Lys103, Tyr127, and Asn177. At Lys239 the chain carries N6-(pyridoxal phosphate)lysine. Residue Arg247 participates in pyridoxal 5'-phosphate binding. Residue Arg365 participates in substrate binding.

The protein belongs to the class-I pyridoxal-phosphate-dependent aminotransferase family. LL-diaminopimelate aminotransferase subfamily. In terms of assembly, homodimer. Pyridoxal 5'-phosphate serves as cofactor.

The catalysed reaction is (2S,6S)-2,6-diaminopimelate + 2-oxoglutarate = (S)-2,3,4,5-tetrahydrodipicolinate + L-glutamate + H2O + H(+). It participates in amino-acid biosynthesis; L-lysine biosynthesis via DAP pathway; LL-2,6-diaminopimelate from (S)-tetrahydrodipicolinate (aminotransferase route): step 1/1. Functionally, involved in the synthesis of meso-diaminopimelate (m-DAP or DL-DAP), required for both lysine and peptidoglycan biosynthesis. Catalyzes the direct conversion of tetrahydrodipicolinate to LL-diaminopimelate. This Nostoc sp. (strain PCC 7120 / SAG 25.82 / UTEX 2576) protein is LL-diaminopimelate aminotransferase 2.